The following is an 875-amino-acid chain: Alanine--tRNA ligase (875 aa).

Zn(2+)-binding residues include His596, His600, Cys700, and His704.

This sequence belongs to the class-II aminoacyl-tRNA synthetase family. Requires Zn(2+) as cofactor.

The protein resides in the cytoplasm. It catalyses the reaction tRNA(Ala) + L-alanine + ATP = L-alanyl-tRNA(Ala) + AMP + diphosphate. Functionally, catalyzes the attachment of alanine to tRNA(Ala) in a two-step reaction: alanine is first activated by ATP to form Ala-AMP and then transferred to the acceptor end of tRNA(Ala). Also edits incorrectly charged Ser-tRNA(Ala) and Gly-tRNA(Ala) via its editing domain. The polypeptide is Alanine--tRNA ligase (Methanocella arvoryzae (strain DSM 22066 / NBRC 105507 / MRE50)).